A 364-amino-acid polypeptide reads, in one-letter code: Tyrosine--tRNA ligase (364 aa).

Y39 lines the L-tyrosine pocket. ATP contacts are provided by H49 and W52. Residues Y165, Q169, D172, and Q187 each coordinate L-tyrosine. The short motif at K238–S242 is the 'KMSKS' region element. K241 contacts ATP.

The protein belongs to the class-I aminoacyl-tRNA synthetase family. TyrS type 4 subfamily. Homodimer.

The protein localises to the cytoplasm. The catalysed reaction is tRNA(Tyr) + L-tyrosine + ATP = L-tyrosyl-tRNA(Tyr) + AMP + diphosphate + H(+). Functionally, catalyzes the attachment of tyrosine to tRNA(Tyr) in a two-step reaction: tyrosine is first activated by ATP to form Tyr-AMP and then transferred to the acceptor end of tRNA(Tyr). This Aeropyrum pernix (strain ATCC 700893 / DSM 11879 / JCM 9820 / NBRC 100138 / K1) protein is Tyrosine--tRNA ligase.